The following is a 359-amino-acid chain: Histidinol-phosphate aminotransferase (359 aa).

The residue at position 217 (K217) is an N6-(pyridoxal phosphate)lysine.

This sequence belongs to the class-II pyridoxal-phosphate-dependent aminotransferase family. Histidinol-phosphate aminotransferase subfamily. As to quaternary structure, homodimer. Pyridoxal 5'-phosphate serves as cofactor.

The enzyme catalyses L-histidinol phosphate + 2-oxoglutarate = 3-(imidazol-4-yl)-2-oxopropyl phosphate + L-glutamate. It functions in the pathway amino-acid biosynthesis; L-histidine biosynthesis; L-histidine from 5-phospho-alpha-D-ribose 1-diphosphate: step 7/9. The sequence is that of Histidinol-phosphate aminotransferase from Salmonella typhi.